The sequence spans 1120 residues: MVSRFYQIPGTHRPSSAISSSNESSSLLSARRISQTYFNYQATPECQKVSSKYDPDNPNKDKLGTYDGVFVPTALNVLSILMFLRFGFILGQLGIICTIGLLLLSYTINLLTTLSISAISTNGTVRGGGAYYMISRSLGPEFGGSIGLVFFLGQVFNAGMNAVGIIEPLLYNLGYSAQGEPPAALGELLPRGHWHEFTYATVILFLCFSVAFVGSQTVSRAGNILFLVLAASIFSIPLSALIRSPFTEGGISYTGPSWQTFHDNLLPHLTKGAAGSLLKGKETFNDLFGVFFPATAGIFAGAGMSSELRKPSKSIPKGTLWGLLFTFICYAVVVFSMGCSIPRRSLYDEVQIIQTISSVQWVIFMGEMATSLFSIIVGMLGAAYVLEAIAKDNIIPGLEIFAHSPLYSLIFTWILTQLCLFSDVNKIATFITMTFLMTFVVMNLACFLLGISSAPNFRPSFKYFNRYTTAIGALLSVVAMLIVDGISASVLFLAMILLFLFIHYFSPPKSWGDVSQSLIYHQVRKYLLRLRQDNIKYWRPQILLFVDNPRTSWNLIRFCNHLKKGGLYILGHVAVTADFPKQLNELKTQQKAWMKIRDMAAIKAFVQVGTGPSLIWGIRNVFIGSGLGGMKPNITVVGFFDLESYRKHIPQSRSQNNLQKQVEIKATVPRSTCSDVKINVPLPTDECKNETKVNVQQWVQIVEDLSLMQSNIAIAHGFKNLEIPNKRDSCFPKKTIDLYPIQMCGKVEAKGDQPAAITTNFDTYTLILQLAAILVTVPEWKRTHSLRVILFVEQEYHRTNETQRMKKLLQVLRIDAEVLVVSLDQFRVYNTIVKGDPIVFDYVNSKLADNEWWKDLVEARDTLKPKRRFSTIEPQTIAKQFTQSRKYTSGVQKLGVSFTMNTRMPTNRIDTPCESEDSDLDTDLTSIRDAFSASTNISVGKDLTTKSKTGSDRTNLLVKNLQSDVSTQSLRPVFSSNTLPRTRVVEDGTGEQPTLIPIAEPDLSNGNGTGSGIGNGNKLKKPVLPELSPCCSKDSLVTAMQNLGFNDLPSTAQHLVLNDVMTQMSKSSDLIFSTLPVPALGTHEDHDASLQYVEDLDIWLEGLPPCMLINSQTMTVTTAL.

Positions 1-21 are disordered; sequence MVSRFYQIPGTHRPSSAISSS. Residues 1–62 are Cytoplasmic-facing; that stretch reads MVSRFYQIPG…YDPDNPNKDK (62 aa). Ser-34 carries the post-translational modification Phosphoserine. Residues 63-83 traverse the membrane as a helical segment; that stretch reads LGTYDGVFVPTALNVLSILMF. Topologically, residues 84-85 are vacuolar; the sequence is LR. Residues 86–106 form a helical membrane-spanning segment; sequence FGFILGQLGIICTIGLLLLSY. The Cytoplasmic segment spans residues 107 to 145; it reads TINLLTTLSISAISTNGTVRGGGAYYMISRSLGPEFGGS. Residues 146–166 form a helical membrane-spanning segment; that stretch reads IGLVFFLGQVFNAGMNAVGII. Over 167–193 the chain is Vacuolar; sequence EPLLYNLGYSAQGEPPAALGELLPRGH. A helical membrane pass occupies residues 194-214; the sequence is WHEFTYATVILFLCFSVAFVG. Topologically, residues 215–221 are cytoplasmic; it reads SQTVSRA. A helical transmembrane segment spans residues 222–242; sequence GNILFLVLAASIFSIPLSALI. Topologically, residues 243–283 are vacuolar; sequence RSPFTEGGISYTGPSWQTFHDNLLPHLTKGAAGSLLKGKET. Residues 284–304 traverse the membrane as a helical segment; the sequence is FNDLFGVFFPATAGIFAGAGM. The Cytoplasmic segment spans residues 305–317; that stretch reads SSELRKPSKSIPK. A helical transmembrane segment spans residues 318–338; sequence GTLWGLLFTFICYAVVVFSMG. At 339–360 the chain is on the vacuolar side; it reads CSIPRRSLYDEVQIIQTISSVQ. The helical transmembrane segment at 361-381 threads the bilayer; the sequence is WVIFMGEMATSLFSIIVGMLG. Residues 382–393 lie on the Cytoplasmic side of the membrane; it reads AAYVLEAIAKDN. A helical transmembrane segment spans residues 394–414; it reads IIPGLEIFAHSPLYSLIFTWI. Residues 415–430 are Vacuolar-facing; sequence LTQLCLFSDVNKIATF. A helical transmembrane segment spans residues 431-451; that stretch reads ITMTFLMTFVVMNLACFLLGI. The Cytoplasmic segment spans residues 452–462; that stretch reads SSAPNFRPSFK. Residues 463–482 form a helical membrane-spanning segment; it reads YFNRYTTAIGALLSVVAMLI. Over 483–487 the chain is Vacuolar; sequence VDGIS. A helical membrane pass occupies residues 488–506; it reads ASVLFLAMILLFLFIHYFS. Residues 507–1120 are Cytoplasmic-facing; that stretch reads PPKSWGDVSQ…SQTMTVTTAL (614 aa). Phosphoserine occurs at positions 654, 915, and 918.

This sequence belongs to the SLC12A transporter family.

Its subcellular location is the vacuole membrane. Catalyzes the coordinated symport of chloride with potassium ions across the vacuolar membrane. Involved in vacuolar osmoregulation. This chain is Vacuolar cation-chloride cotransporter 1, found in Saccharomyces cerevisiae (strain ATCC 204508 / S288c) (Baker's yeast).